Here is a 258-residue protein sequence, read N- to C-terminus: Small ribosomal subunit protein uS2 (258 aa).

The interval 226–258 (KQGQDDEETLEVDFKENADGSEEIVSAEENPED) is disordered. The span at 244-258 (DGSEEIVSAEENPED) shows a compositional bias: acidic residues.

This sequence belongs to the universal ribosomal protein uS2 family.

The polypeptide is Small ribosomal subunit protein uS2 (Lactobacillus acidophilus (strain ATCC 700396 / NCK56 / N2 / NCFM)).